We begin with the raw amino-acid sequence, 72 residues long: Large ribosomal subunit protein bL31c (72 aa).

Belongs to the bacterial ribosomal protein bL31 family. Type A subfamily. Part of the 50S ribosomal subunit.

The protein resides in the plastid. It localises to the chloroplast. In terms of biological role, binds the 23S rRNA. The sequence is that of Large ribosomal subunit protein bL31c from Guillardia theta (Cryptophyte).